The chain runs to 344 residues: Arginine N-succinyltransferase (344 aa).

A succinyl-CoA-binding site is contributed by Leu-125. His-229 serves as the catalytic Proton donor.

Belongs to the arginine N-succinyltransferase family.

The catalysed reaction is succinyl-CoA + L-arginine = N(2)-succinyl-L-arginine + CoA + H(+). It functions in the pathway amino-acid degradation; L-arginine degradation via AST pathway; L-glutamate and succinate from L-arginine: step 1/5. In terms of biological role, catalyzes the transfer of succinyl-CoA to arginine to produce N(2)-succinylarginine. The chain is Arginine N-succinyltransferase from Shigella boydii serotype 4 (strain Sb227).